Here is a 275-residue protein sequence, read N- to C-terminus: Large ribosomal subunit protein uL2 (275 aa).

The disordered stretch occupies residues V224–G251.

This sequence belongs to the universal ribosomal protein uL2 family. In terms of assembly, part of the 50S ribosomal subunit. Forms a bridge to the 30S subunit in the 70S ribosome.

Functionally, one of the primary rRNA binding proteins. Required for association of the 30S and 50S subunits to form the 70S ribosome, for tRNA binding and peptide bond formation. It has been suggested to have peptidyltransferase activity; this is somewhat controversial. Makes several contacts with the 16S rRNA in the 70S ribosome. The sequence is that of Large ribosomal subunit protein uL2 from Heliobacterium modesticaldum (strain ATCC 51547 / Ice1).